Consider the following 1642-residue polypeptide: DNA-directed RNA polymerase I subunit RPA1 (1642 aa).

The Zn(2+) site is built by Cys-66, Cys-69, Cys-75, and His-78. Mg(2+)-binding residues include Asp-565, Asp-567, and Asp-569. Residues Pro-939–Glu-951 are bridging helix. The segment at Asp-1337–Ala-1428 is disordered. Residues Lys-1340–Asp-1350 show a composition bias toward acidic residues. Basic and acidic residues predominate over residues Glu-1351–Asp-1361. Composition is skewed to acidic residues over residues Asp-1362–Ala-1373 and Lys-1386–Gly-1424. Residues Ser-1364 and Ser-1365 each carry the phosphoserine modification.

It belongs to the RNA polymerase beta' chain family. As to quaternary structure, component of the RNA polymerase I (Pol I) complex consisting of at least 13 subunits. Phosphorylated.

Its subcellular location is the nucleus. The protein localises to the nucleolus. The enzyme catalyses RNA(n) + a ribonucleoside 5'-triphosphate = RNA(n+1) + diphosphate. Functionally, DNA-dependent RNA polymerase catalyzes the transcription of DNA into RNA using the four ribonucleoside triphosphates as substrates. Largest and catalytic core component of RNA polymerase I which synthesizes ribosomal RNA precursors. Forms the polymerase active center together with the second largest subunit. A single stranded DNA template strand of the promoter is positioned within the central active site cleft of Pol I. A bridging helix emanates from RPA1 and crosses the cleft near the catalytic site and is thought to promote translocation of Pol I by acting as a ratchet that moves the RNA-DNA hybrid through the active site by switching from straight to bent conformations at each step of nucleotide addition. The sequence is that of DNA-directed RNA polymerase I subunit RPA1 (RpI1) from Drosophila melanogaster (Fruit fly).